A 461-amino-acid chain; its full sequence is Toxin CfTX-B (461 aa).

The signal sequence occupies residues 1–24 (MDPRISSRLRALALLVFVISITDG). The propeptide occupies 25–31 (IPNRAKR).

The protein belongs to the jellyfish toxin family. Type II subfamily. Oligomer. In terms of processing, contains 2 disulfide bonds. Nematocytes.

It is found in the secreted. Its subcellular location is the nematocyst. It localises to the target cell membrane. Functionally, the fraction containing this toxin and CfTX-B shows potent hemolytic activity. This fraction causes minor effects on the cardiovascular system of anesthetized rats (at 25 ug/kg), since it has no significant effects on heart rate but produces relatively small increases in mean arterial pressure. The polypeptide is Toxin CfTX-B (Chironex fleckeri (Australian box jellyfish)).